Consider the following 145-residue polypeptide: UPF0260 protein VS_0923 (145 aa).

It belongs to the UPF0260 family.

The protein is UPF0260 protein VS_0923 of Vibrio atlanticus (strain LGP32) (Vibrio splendidus (strain Mel32)).